An 83-amino-acid polypeptide reads, in one-letter code: MKSSHTSLICILMLSLVALHQCVRMKVKEIGRSNKIYIPPCFRDSCDHVLKKDCYCCGSKPDLCWEDQHYCNTHCPPLKPLIN.

Positions 1-22 are cleaved as a signal peptide; sequence MKSSHTSLICILMLSLVALHQC. Intrachain disulfides connect Cys41–Cys56, Cys46–Cys75, Cys54–Cys71, and Cys57–Cys64.

It belongs to the MEG family. Expressed exclusively in ovule embryo sacs and in early developing endosperms.

Functionally, maternally-contributed central cell peptide regulating suspensor development and correct auxin distribution in early developing embryos. The chain is EMBRYO SURROUNDING FACTOR 1.1 (ESF1.1) from Arabidopsis thaliana (Mouse-ear cress).